The sequence spans 240 residues: Vacuolar-sorting protein SNF7 (240 aa).

Threonine 72 is modified (phosphothreonine). Residues serine 119 and serine 193 each carry the phosphoserine modification. The disordered stretch occupies residues serine 193–leucine 240. The segment covering asparagine 195–asparagine 212 has biased composition (polar residues). A compositionally biased stretch (acidic residues) spans glycine 217–glutamate 228. Lysine 229 is covalently cross-linked (Glycyl lysine isopeptide (Lys-Gly) (interchain with G-Cter in ubiquitin)). Over residues lysine 229–leucine 240 the composition is skewed to basic and acidic residues.

This sequence belongs to the SNF7 family. In terms of assembly, core component of the ESCRT-III complex (endosomal sorting required for transport complex III). ESCRT-III appears to be sequentially assembled as a flat lattice on the endosome membrane and forms a transient 450 kDa complex that contains DID4, oligomerized SNF7, VPS20 and VPS24. SNF7 polymerizes into spirals at the surface of lipid bilayers. SNF7 polymerization is nucleated by association of SNF7 with VPS20; the process is terminated through association of VPS24, possibly by capping the SNF7 filament. Interacts with VTA1; the interaction requires DID2. Interacts with BRO1. Interacts with DOA4. Interacts with HEH1 and HEH2. Interacts with RIM20 and YGR122W.

It is found in the cytoplasm. The protein resides in the endosome membrane. Its subcellular location is the nucleus envelope. Functionally, acts a component of the ESCRT-III complex required for the sorting and concentration of proteins resulting in the entry of these proteins into the invaginating vesicles of the multivesicular body (MVB). The sequential action of ESCRT-0, -I, and -II together with the ordered assembly of ESCRT-III links membrane invagination to cargo sorting. Membrane scission in the neck of the growing vesicle releases mature, cargo-laden ILVs into the lumen. ESCRT-III is critical for late steps in MVB sorting, such as membrane invagination and final cargo sorting and recruitment of late-acting components of the sorting machinery. SNF7 is the most abundant ESCRT-III subunit which forms membrane-sculpting filaments with 30 Angstrom periodicity and a exposed cationic membrane-binding surface. Its activation requires a prominent conformational rearrangement to expose protein-membrane and protein-protein interfaces. SNF7 filaments then form spirals that could function as spiral springs. The elastic expansion of compressed SNF7 spirals generates an area difference between the two sides of the membrane and thus curvature which could be the origin of membrane deformation leading eventually to fission. SNF7 recruits BRO1, which in turn recruits DOA4, which deubiquitinates cargos before their enclosure within MVB vesicles. ESCRT-III is also recruited to the nuclear envelope (NE) by integral INM proteins to surveil and clear defective nuclear pore complex (NPC) assembly intermediates to ensure the fidelity of NPC assembly. This chain is Vacuolar-sorting protein SNF7, found in Saccharomyces cerevisiae (strain ATCC 204508 / S288c) (Baker's yeast).